We begin with the raw amino-acid sequence, 398 residues long: Tyrosine--tRNA ligase (398 aa).

Residues 48 to 57 carry the 'HIGH' region motif; the sequence is PTGADIHLGH. The short motif at 235 to 239 is the 'KMSKS' region element; it reads KMSKS. Lys238 contacts ATP. Positions 334–398 constitute an S4 RNA-binding domain; it reads VKLAYLLGAT…GKNKFVRLVL (65 aa).

Belongs to the class-I aminoacyl-tRNA synthetase family. TyrS type 2 subfamily. As to quaternary structure, homodimer.

The protein localises to the cytoplasm. It carries out the reaction tRNA(Tyr) + L-tyrosine + ATP = L-tyrosyl-tRNA(Tyr) + AMP + diphosphate + H(+). Its function is as follows. Catalyzes the attachment of tyrosine to tRNA(Tyr) in a two-step reaction: tyrosine is first activated by ATP to form Tyr-AMP and then transferred to the acceptor end of tRNA(Tyr). The chain is Tyrosine--tRNA ligase from Trichormus variabilis (strain ATCC 29413 / PCC 7937) (Anabaena variabilis).